A 423-amino-acid polypeptide reads, in one-letter code: Serine--tRNA ligase (423 aa).

A compositionally biased stretch (basic and acidic residues) spans 1–12 (MIDLKALRENPD). Residues 1–26 (MIDLKALRENPDVGRASQRSRGEDPE) are disordered. 230–232 (TSE) contacts L-serine. ATP is bound by residues 261–263 (RRE) and Val-277. Glu-284 provides a ligand contact to L-serine. Position 348–351 (348–351 (ELTS)) interacts with ATP. L-serine is bound at residue Thr-383.

It belongs to the class-II aminoacyl-tRNA synthetase family. Type-1 seryl-tRNA synthetase subfamily. As to quaternary structure, homodimer. The tRNA molecule binds across the dimer.

The protein localises to the cytoplasm. It carries out the reaction tRNA(Ser) + L-serine + ATP = L-seryl-tRNA(Ser) + AMP + diphosphate + H(+). The enzyme catalyses tRNA(Sec) + L-serine + ATP = L-seryl-tRNA(Sec) + AMP + diphosphate + H(+). The protein operates within aminoacyl-tRNA biosynthesis; selenocysteinyl-tRNA(Sec) biosynthesis; L-seryl-tRNA(Sec) from L-serine and tRNA(Sec): step 1/1. Its function is as follows. Catalyzes the attachment of serine to tRNA(Ser). Is also able to aminoacylate tRNA(Sec) with serine, to form the misacylated tRNA L-seryl-tRNA(Sec), which will be further converted into selenocysteinyl-tRNA(Sec). The polypeptide is Serine--tRNA ligase (Beutenbergia cavernae (strain ATCC BAA-8 / DSM 12333 / CCUG 43141 / JCM 11478 / NBRC 16432 / NCIMB 13614 / HKI 0122)).